We begin with the raw amino-acid sequence, 447 residues long: Serine/threonine-protein phosphatase 2A 55 kDa regulatory subunit B gamma isoform (447 aa).

WD repeat units lie at residues 22–61 (TEAD…KNAP), 87–128 (EIEE…KRPE), 171–209 (GHTY…RSFN), 220–260 (DLTE…LCDK), 279–317 (EIIS…RPIE), 334–375 (ESDC…DVTL), and 410–446 (DFTK…NSDM).

This sequence belongs to the phosphatase 2A regulatory subunit B family. As to quaternary structure, PP2A consists of a common heterodimeric core enzyme, composed of a 36 kDa catalytic subunit (subunit C) and a 65 kDa constant regulatory subunit (PR65 or subunit A), that associates with a variety of regulatory subunits. Proteins that associate with the core dimer include three families of regulatory subunits B (the R2/B/PR55/B55, R3/B''/PR72/PR130/PR59 and R5/B'/B56 families), the 48 kDa variable regulatory subunit, viral proteins, and cell signaling molecules. Interacts with IER5. As to expression, highly expressed in brain.

The B regulatory subunit might modulate substrate selectivity and catalytic activity, and might also direct the localization of the catalytic enzyme to a particular subcellular compartment. This Rattus norvegicus (Rat) protein is Serine/threonine-protein phosphatase 2A 55 kDa regulatory subunit B gamma isoform (Ppp2r2c).